The primary structure comprises 134 residues: Urease subunit beta (134 aa).

Belongs to the urease beta subunit family. As to quaternary structure, heterotrimer of UreA (gamma), UreB (beta) and UreC (alpha) subunits. Three heterotrimers associate to form the active enzyme.

The protein localises to the cytoplasm. It catalyses the reaction urea + 2 H2O + H(+) = hydrogencarbonate + 2 NH4(+). The protein operates within nitrogen metabolism; urea degradation; CO(2) and NH(3) from urea (urease route): step 1/1. The protein is Urease subunit beta of Staphylococcus saprophyticus subsp. saprophyticus (strain ATCC 15305 / DSM 20229 / NCIMB 8711 / NCTC 7292 / S-41).